The sequence spans 5142 residues: Protein piccolo (5142 aa).

Over residues 1-21 (MGNEASLEGEGLPEGLAAAAA) the composition is skewed to low complexity. 2 disordered regions span residues 1 to 154 (MGNE…SMMP) and 177 to 583 (DLIS…PSQG). Basic and acidic residues-rich tracts occupy residues 114–125 (RTTDTFRSEQKL), 136–150 (KESK…EHKS), and 188–202 (ETTK…EQGK). Over residues 232–244 (QDGTPKSISSQQP) the composition is skewed to polar residues. 2 stretches are compositionally biased toward pro residues: residues 298-317 (LPSP…PPAQ) and 352-371 (PVQP…PAKP). The span at 376 to 385 (TGSEKPSSEQ) shows a compositional bias: polar residues. A 10 X 10 AA tandem approximate repeats of P-A-K-P-Q-P-Q-Q-P-X region spans residues 397–555 (VGKTPAQQPG…PAKPSAQQST (159 aa)). Over residues 467 to 493 (TKPPSQLPGPAKPPPQQPGPAKPPPQQ) the composition is skewed to pro residues. Residues 494–506 (PGSAKPPSQQPGS) show a composition bias toward low complexity. Pro residues predominate over residues 507–522 (TKPPPQQPGPAKPSPQ). The span at 523–554 (QPGSTKPPSQQPGSAKPSAQQPSPAKPSAQQS) shows a compositional bias: low complexity. The C4-type zinc finger occupies 589-613 (CPLCNTTELLLHVPEKANFNTCTEC). Disordered regions lie at residues 650–929 (LAPV…TVTG) and 945–1058 (LIST…PEST). Over residues 673 to 683 (SKSSPQPQQTS) the composition is skewed to low complexity. Composition is skewed to basic and acidic residues over residues 684-702 (PKKD…EPKK) and 743-755 (EQDK…DKPK). The segment covering 765–774 (DLVSSSSATT) has biased composition (polar residues). Over residues 841-857 (KGQKQVDPVQKKEEPKK) the composition is skewed to basic and acidic residues. The span at 873–882 (KGSPTPPGPR) shows a compositional bias: pro residues. Positions 889–927 (VPTPQQSPKPQEQSRRFSLNLGSITDAPKSQPTTPQETV) are enriched in polar residues. Residues Ser-906 and Ser-918 each carry the phosphoserine modification. Thr-922 carries the post-translational modification Phosphothreonine. Positions 949 to 969 (AGQPGPHSQSGPGAPMKQAPA) are enriched in low complexity. 2 stretches are compositionally biased toward basic and acidic residues: residues 996–1012 (VKKE…EPKA) and 1019–1034 (KRTE…KDSK). The segment at 1059–1082 (CPLCKTELNIGSKDPPNFNTCTEC) adopts a C4-type zinc-finger fold. 4 disordered regions span residues 1120–1163 (GDIR…QEQE), 1183–1386 (EKIP…TDEK), 1391–1410 (GLKK…SDLA), and 1423–1868 (QAST…SDPE). Residues 1126–1139 (PPAPSGPKASPMPV) show a composition bias toward pro residues. 3 stretches are compositionally biased toward basic and acidic residues: residues 1193 to 1265 (QKQE…HDLL), 1307 to 1318 (PKEDDKTTKTIK), and 1330 to 1347 (DQVE…DKSD). Residues 1348 to 1358 (TSSSQQPKSPQ) are compositionally biased toward low complexity. 8 positions are modified to phosphoserine: Ser-1356, Ser-1366, Ser-1367, Ser-1396, Ser-1398, Ser-1401, Ser-1402, and Ser-1405. Polar residues predominate over residues 1359–1374 (GLSDTGYSSDGISSSL). Residues 1398–1407 (SQESSPSSPS) show a composition bias toward low complexity. Composition is skewed to basic and acidic residues over residues 1428-1451 (ADEK…DQEK) and 1469-1510 (KESQ…REPY). Ser-1516, Ser-1517, Ser-1519, Ser-1522, Ser-1546, Ser-1549, Ser-1570, and Ser-1572 each carry phosphoserine. A compositionally biased stretch (acidic residues) spans 1564–1576 (SADEDASGSEDDE). Thr-1617 carries the phosphothreonine modification. 3 positions are modified to phosphoserine: Ser-1618, Ser-1628, and Ser-1640. The span at 1631-1640 (DEDDEAFDES) shows a compositional bias: acidic residues. Residues 1641-1652 (PELKYRETKSQE) show a composition bias toward basic and acidic residues. Residues 1671–1689 (ELNSTIADKYSAESSQKKT) are compositionally biased toward polar residues. The segment covering 1693–1703 (FDEEPELEMES) has biased composition (acidic residues). Ser-1703 carries the post-translational modification Phosphoserine. The residue at position 1705 (Thr-1705) is a Phosphothreonine. A phosphoserine mark is found at Ser-1707 and Ser-1712. Over residues 1715-1732 (EGSSSLHASSFTPGTSPT) the composition is skewed to polar residues. Residues 1772–1785 (DSSEEEELREEEEL) show a composition bias toward acidic residues. 2 positions are modified to phosphoserine: Ser-1773 and Ser-1774. Over residues 1786-1799 (LKEQEKQREIEQQQ) the composition is skewed to basic and acidic residues. Thr-1825 is subject to Phosphothreonine. At Ser-1831 the chain carries Phosphoserine. Over residues 1840–1855 (EELRQAAEMEELHRSS) the composition is skewed to basic and acidic residues. A phosphoserine mark is found at Ser-1860, Ser-1865, Ser-1873, and Ser-1894. 3 disordered regions span residues 2169–2192 (PSES…SSVC), 2365–2438 (ETFG…PTIL), and 2504–2536 (EPSK…PTGL). Low complexity-rich tracts occupy residues 2174 to 2192 (TSVP…SSVC) and 2374 to 2387 (SQLP…SSLP). 2 stretches are compositionally biased toward pro residues: residues 2404–2433 (QPPP…PTSP) and 2506–2517 (SKPPIAPKPVIP). Ser-2562 is subject to Phosphoserine. At Thr-3069 the chain carries Phosphothreonine. 2 disordered regions span residues 3407–3508 (EKQP…DKTK) and 3558–3626 (KTYK…LYSP). Residues 3432–3441 (DDPRSFKKIV) are compositionally biased toward basic and acidic residues. Position 3443 is a phosphoserine (Ser-3443). 2 positions are modified to phosphothreonine: Thr-3447 and Thr-3474. The span at 3474-3483 (TDDEDQDEWD) shows a compositional bias: acidic residues. Residues 3574–3585 (DTQSPQYLSATS) are compositionally biased toward polar residues. Ser-3577, Ser-3585, Ser-3615, Ser-3619, Ser-3625, Ser-3628, Ser-3631, Ser-3652, Ser-3678, Ser-3680, and Ser-3686 each carry phosphoserine. 2 disordered regions span residues 3652–3746 (SPQK…MGTV) and 3833–3908 (YMSD…QQSH). Polar residues-rich tracts occupy residues 3701 to 3716 (EGYT…SSGA) and 3733 to 3745 (STGT…TMGT). At Ser-3835 the chain carries Phosphoserine. The segment covering 3845–3857 (TRIESQHGIERPR) has biased composition (basic and acidic residues). Polar residues predominate over residues 3859-3908 (APQTEFSQFIPPQTQTESQLVPPTSPYTQYQYSSPALPTQAPTSYTQQSH). Ser-4088 and Ser-4204 each carry phosphoserine. A disordered region spans residues 4278 to 4301 (EADKPYSSGSRSRPSSRPSSVYGL). Residues 4282-4301 (PYSSGSRSRPSSRPSSVYGL) show a composition bias toward low complexity. A phosphoserine mark is found at Ser-4358, Ser-4362, Ser-4365, Ser-4394, and Ser-4430. The disordered stretch occupies residues 4389–4411 (RDQFGSSHSLPEVQQHMREESRT). In terms of domain architecture, PDZ spans 4496–4590 (RIKITRDSKD…EAEICVRLDL (95 aa)). Disordered regions lie at residues 4597–4618 (ENSQ…KSPG) and 4645–4690 (EKGS…TKVV). The span at 4598-4615 (NSQHLELHEPPKAVDKAK) shows a compositional bias: basic and acidic residues. Low complexity predominate over residues 4652-4673 (SGPTSAGSSSVPSPGQPGSPSV). Ser-4664 carries the phosphoserine modification. The C2 1 domain maps to 4694–4823 (ITGEIQLQIN…SHLDNTPRWY (130 aa)). Ca(2+)-binding residues include Asp-4723 and Asp-4729. The residue at position 4778 (Ser-4778) is a Phosphoserine. Ca(2+) contacts are provided by Asp-4793, Asp-4795, Ser-4798, and Asp-4801. Disordered stretches follow at residues 4830 to 4907 (ESID…VTQT) and 4930 to 4986 (PTKP…QNGQ). Low complexity-rich tracts occupy residues 4838-4853 (HSSQ…SVIK) and 4877-4887 (SSPGSSKSSSE). Over residues 4895–4907 (PSRSQSKTSVTQT) the composition is skewed to polar residues. The span at 4941 to 4965 (SSVSTGSSGSSFGSGYSVDSEGSSS) shows a compositional bias: low complexity. One can recognise a C2 2 domain in the interval 5007 to 5132 (VMGEIKIALK…DLRKRIVNWH (126 aa)).

Interacts with BSN, ERC2/CAST1, RIMS1 and UNC13A. Interacts (via C-terminus) with TRIO (via N-terminus). Interacts with CTBP1. Interacts with SIAH1; this interaction negatively regulates SIAH1 E3 ligase activity. Directly interacts with GIT1 and GIT2. Ca(2+) is required as a cofactor. As to expression, moderately expressed in the developing cerebral cortex.

The protein localises to the presynaptic active zone. Functionally, scaffold protein of the presynaptic cytomatrix at the active zone (CAZ) which is the place in the synapse where neurotransmitter is released. After synthesis, participates in the formation of Golgi-derived membranous organelles termed Piccolo-Bassoon transport vesicles (PTVs) that are transported along axons to sites of nascent synaptic contacts. At the presynaptic active zone, regulates the spatial organization of synaptic vesicle cluster, the protein complexes that execute membrane fusion and compensatory endocytosis. Organizes as well the readily releasable pool of synaptic vesicles and safeguards a fraction of them to be not immediately available for action potential-induced release. Also functions in processes other than assembly such as the regulation of specific presynaptic protein ubiquitination by interacting with SIAH1 or the regulation of presynaptic autophagy. Also mediates synapse to nucleus communication leading to reconfiguration of gene expression by associating with the transcriptional corepressor CTBP1 and by subsequently reducing the size of its pool available for nuclear import. This is Protein piccolo from Homo sapiens (Human).